We begin with the raw amino-acid sequence, 69 residues long: Antimicrobial peptide Eval36 (69 aa).

Positions 1 to 23 are cleaved as a signal peptide; it reads MKAQFAILVISMMLLQLIVQTES. L37 carries the post-translational modification Leucine amide. A propeptide spanning residues 38–69 is cleaved from the precursor; the sequence is GKRGLRNLDDFQDFLDSDTSDADLRMLRDMFR.

It belongs to the non-disulfide-bridged peptide (NDBP) superfamily. Short antimicrobial peptide (group 4) family. As to expression, expressed by the venom gland.

It localises to the secreted. Its function is as follows. Probable antimicrobial peptide. Shows low inhibitory activity against herpes simplex virus type 1 (HSV-1). This chain is Antimicrobial peptide Eval36, found in Euscorpiops validus (Scorpion).